Here is a 110-residue protein sequence, read N- to C-terminus: Small ribosomal subunit protein uS10m (110 aa).

It belongs to the universal ribosomal protein uS10 family.

The protein localises to the mitochondrion. The sequence is that of Small ribosomal subunit protein uS10m (RPS10) from Pisum sativum (Garden pea).